The primary structure comprises 215 residues: Deoxyribose-phosphate aldolase (215 aa).

The active-site Proton donor/acceptor is the aspartate 89. Lysine 153 functions as the Schiff-base intermediate with acetaldehyde in the catalytic mechanism. The active-site Proton donor/acceptor is lysine 182.

This sequence belongs to the DeoC/FbaB aldolase family. DeoC type 1 subfamily.

The protein localises to the cytoplasm. It catalyses the reaction 2-deoxy-D-ribose 5-phosphate = D-glyceraldehyde 3-phosphate + acetaldehyde. It participates in carbohydrate degradation; 2-deoxy-D-ribose 1-phosphate degradation; D-glyceraldehyde 3-phosphate and acetaldehyde from 2-deoxy-alpha-D-ribose 1-phosphate: step 2/2. Catalyzes a reversible aldol reaction between acetaldehyde and D-glyceraldehyde 3-phosphate to generate 2-deoxy-D-ribose 5-phosphate. The polypeptide is Deoxyribose-phosphate aldolase (Lactiplantibacillus plantarum (strain ATCC BAA-793 / NCIMB 8826 / WCFS1) (Lactobacillus plantarum)).